The sequence spans 222 residues: UPF0502 protein PBPRB0676 (222 aa).

The protein belongs to the UPF0502 family.

This chain is UPF0502 protein PBPRB0676, found in Photobacterium profundum (strain SS9).